Consider the following 123-residue polypeptide: Large ribosomal subunit protein uL18 (123 aa).

This sequence belongs to the universal ribosomal protein uL18 family. In terms of assembly, part of the 50S ribosomal subunit; part of the 5S rRNA/L5/L18/L25 subcomplex. Contacts the 5S and 23S rRNAs.

In terms of biological role, this is one of the proteins that bind and probably mediate the attachment of the 5S RNA into the large ribosomal subunit, where it forms part of the central protuberance. The chain is Large ribosomal subunit protein uL18 from Chlamydia muridarum (strain MoPn / Nigg).